The chain runs to 217 residues: uncharacterized protein (217 aa).

The next 2 helical transmembrane spans lie at 151-171 and 177-197; these read LIPF…HSLF and ISFH…FILF.

Its subcellular location is the mitochondrion membrane. This is an uncharacterized protein from Schizosaccharomyces pombe (strain 972 / ATCC 24843) (Fission yeast).